The primary structure comprises 1092 residues: NAD-specific glutamate dehydrogenase (1092 aa).

The active site involves K626.

Belongs to the Glu/Leu/Phe/Val dehydrogenases family. Homotetramer. Interacts with NNK1. Phosphorylated by a complex containing the NNK1 kinase.

The enzyme catalyses L-glutamate + NAD(+) + H2O = 2-oxoglutarate + NH4(+) + NADH + H(+). NAD(+)-dependent glutamate dehydrogenase which degrades glutamate to ammonia and alpha-ketoglutarate. This is NAD-specific glutamate dehydrogenase (GDH2) from Saccharomyces cerevisiae (strain ATCC 204508 / S288c) (Baker's yeast).